The following is a 484-amino-acid chain: Tyramine receptor 1 (484 aa).

Residues 1 to 54 (MVRVELQAASLMNGSSAAEEPQDALVGGDACGGRRPPSVLGVRLAVPEWEVAVT) are Extracellular-facing. N-linked (GlcNAc...) asparagine glycosylation occurs at Asn13. Residues 55 to 77 (AVSLSLIILITIVGNVLVVLSVF) form a helical membrane-spanning segment. Residues 78-87 (TYKPLRIVQN) lie on the Cytoplasmic side of the membrane. Residues 88-109 (FFIVSLAVADLTVAVLVMPFNV) traverse the membrane as a helical segment. Over 110–126 (AYSLIQRWVFGIVVCKM) the chain is Extracellular. A disulfide bridge connects residues Cys124 and Cys203. Residues 127–147 (WLTCDVLCCTASILNLCAIAL) traverse the membrane as a helical segment. The Cytoplasmic portion of the chain corresponds to 148-167 (DRYWAITDPINYAQKRTLRR). Residues 168–190 (VLAMIAGVWLLSGVISSPPLIGW) form a helical membrane-spanning segment. Topologically, residues 191–215 (NDWPMEFNDTTPCQLTEEQGYVIYS) are extracellular. A glycan (N-linked (GlcNAc...) asparagine) is linked at Asn198. A helical transmembrane segment spans residues 216–237 (SLGSFFIPLFIMTIVYVEIFIA). Residues 238–411 (TKRRLRERAK…LSKERRAART (174 aa)) lie on the Cytoplasmic side of the membrane. Residues 253 to 280 (SAMKQQMAAQAVPSSVPSHDQESVSSET) are compositionally biased toward polar residues. 2 disordered regions span residues 253–322 (SAMK…PAMV) and 358–383 (TTTA…PTPV). The span at 295–306 (EKRRKTKKKSKK) shows a compositional bias: basic residues. Residues 361 to 378 (AVTDSPRSRTASQKGSTA) are compositionally biased toward polar residues. The helical transmembrane segment at 412-433 (LGIIMGVFVVCWLPFFLMYVIV) threads the bilayer. Residues 434 to 448 (PFCNPSCKPSPKLVN) lie on the Extracellular side of the membrane. Residues 449 to 470 (FITWLGYINSALNPIIYTIFNL) traverse the membrane as a helical segment. Residues 471-484 (DFRRAFKKLLHFKT) are Cytoplasmic-facing.

The protein belongs to the G-protein coupled receptor 1 family. In terms of tissue distribution, present mainly in the central nervous system, especially in the supra- and subesophageal, thoracic and abdominal ganglia. Not found in the distal part of optic lobes.

The protein localises to the cell membrane. Functionally, G-protein coupled receptor for tyramine, a known neurotransmitter and neuromodulator and direct precursor of octopamine. The rank order of potency for agonists of this receptor is tyramine &gt; naphazoline &gt; tolazoline &gt; DL-octopamine &gt; dopamine &gt; epinephrine &gt; 5-hydroxytryptamine. For antagonists, the rank order is yohimbine &gt; chlorpromazine &gt; mianserin &gt; phentolamine &gt; metoclopramide. This chain is Tyramine receptor 1 (GCR1), found in Locusta migratoria (Migratory locust).